Reading from the N-terminus, the 336-residue chain is Acetaldehyde dehydrogenase 1 (336 aa).

32-35 (SGVV) lines the NAD(+) pocket. Cys150 (acyl-thioester intermediate) is an active-site residue. Asn309 contacts NAD(+).

Belongs to the acetaldehyde dehydrogenase family.

It carries out the reaction acetaldehyde + NAD(+) + CoA = acetyl-CoA + NADH + H(+). This Mycobacterium ulcerans (strain Agy99) protein is Acetaldehyde dehydrogenase 1 (mhpF).